A 301-amino-acid chain; its full sequence is ATP synthase gamma chain (301 aa).

It belongs to the ATPase gamma chain family. As to quaternary structure, F-type ATPases have 2 components, CF(1) - the catalytic core - and CF(0) - the membrane proton channel. CF(1) has five subunits: alpha(3), beta(3), gamma(1), delta(1), epsilon(1). CF(0) has three main subunits: a, b and c.

It localises to the cell inner membrane. Produces ATP from ADP in the presence of a proton gradient across the membrane. The gamma chain is believed to be important in regulating ATPase activity and the flow of protons through the CF(0) complex. The protein is ATP synthase gamma chain of Bordetella parapertussis (strain 12822 / ATCC BAA-587 / NCTC 13253).